Here is a 228-residue protein sequence, read N- to C-terminus: 5'-methylthioadenosine/S-adenosylhomocysteine nucleosidase (228 aa).

E11 (proton acceptor) is an active-site residue. Substrate-binding positions include G77, I151, and 172 to 173 (ME). Catalysis depends on D196, which acts as the Proton donor.

It belongs to the PNP/UDP phosphorylase family. MtnN subfamily.

The catalysed reaction is S-adenosyl-L-homocysteine + H2O = S-(5-deoxy-D-ribos-5-yl)-L-homocysteine + adenine. It carries out the reaction S-methyl-5'-thioadenosine + H2O = 5-(methylsulfanyl)-D-ribose + adenine. The enzyme catalyses 5'-deoxyadenosine + H2O = 5-deoxy-D-ribose + adenine. Its pathway is amino-acid biosynthesis; L-methionine biosynthesis via salvage pathway; S-methyl-5-thio-alpha-D-ribose 1-phosphate from S-methyl-5'-thioadenosine (hydrolase route): step 1/2. In terms of biological role, catalyzes the irreversible cleavage of the glycosidic bond in both 5'-methylthioadenosine (MTA) and S-adenosylhomocysteine (SAH/AdoHcy) to adenine and the corresponding thioribose, 5'-methylthioribose and S-ribosylhomocysteine, respectively. Also cleaves 5'-deoxyadenosine, a toxic by-product of radical S-adenosylmethionine (SAM) enzymes, into 5-deoxyribose and adenine. This is 5'-methylthioadenosine/S-adenosylhomocysteine nucleosidase from Staphylococcus epidermidis (strain ATCC 12228 / FDA PCI 1200).